Here is a 414-residue protein sequence, read N- to C-terminus: Esterase FrsA (414 aa).

Belongs to the FrsA family.

The enzyme catalyses a carboxylic ester + H2O = an alcohol + a carboxylate + H(+). Its function is as follows. Catalyzes the hydrolysis of esters. The protein is Esterase FrsA of Citrobacter koseri (strain ATCC BAA-895 / CDC 4225-83 / SGSC4696).